A 522-amino-acid chain; its full sequence is Tryptophan 2-halogenase (522 aa).

FAD contacts are provided by Ala17, Glu36, Arg42, His44, Ile45, Ser48, Arg103, Ile127, and Asp296. Chloride is bound by residues Ser307 and Gly308. Val309 contributes to the FAD binding site.

Belongs to the flavin-dependent halogenase family.

In terms of biological role, involved in the incorporation of a chlorinated tryptophan residue into halogenated forms of the secondary metabolites called chondramides. In Chondromyces crocatus, this protein is Tryptophan 2-halogenase.